The chain runs to 139 residues: D-ribose pyranase (139 aa).

The active-site Proton donor is His-20. Substrate-binding positions include Asp-28, His-106, and 128 to 130 (YAN).

This sequence belongs to the RbsD / FucU family. RbsD subfamily. Homodecamer.

Its subcellular location is the cytoplasm. The catalysed reaction is beta-D-ribopyranose = beta-D-ribofuranose. Its pathway is carbohydrate metabolism; D-ribose degradation; D-ribose 5-phosphate from beta-D-ribopyranose: step 1/2. In terms of biological role, catalyzes the interconversion of beta-pyran and beta-furan forms of D-ribose. The polypeptide is D-ribose pyranase (Salmonella choleraesuis (strain SC-B67)).